Consider the following 236-residue polypeptide: Adenylate dimethylallyltransferase (236 aa).

The protein belongs to the isopentenyl transferase family.

The catalysed reaction is dimethylallyl diphosphate + AMP = N(6)-(dimethylallyl)adenosine 5'-phosphate + diphosphate. In terms of biological role, transfers dimethylallyl groups to AMP as part of the biosynthesis of cytokinin phytohormones. This is Adenylate dimethylallyltransferase (ipt) from Allorhizobium ampelinum (strain ATCC BAA-846 / DSM 112012 / S4) (Agrobacterium vitis (strain S4)).